Reading from the N-terminus, the 110-residue chain is uncharacterized protein (110 aa).

The protein to M.jannaschii MJ0123 and MJ1213.

This is an uncharacterized protein from Aquifex aeolicus (strain VF5).